Consider the following 396-residue polypeptide: MTGFLTILSLSLAALSVTNAAQILSVPQGAEVVPNGYIVVMKDDTSEQDFSSHRAWVSNIHHNVTRRGLNGEGVKETYDFDNVRGYSGIFDKDTIKDISNDPKVAFVEPDAIIKQHVFVQQRKAPWGLSRLSNRRGGRNYVFDSTAGNGVWAYVVDSGVDIHHSEFQGRAIWGSNLVDNKNSDGTGHGTHVAGTIAGKTYGIAKKAKIIAVKVLDSEGKGPTSGIIAGINWSIKHARQHGKLQKSVLNMSLGGSYSAGLNHVTARAIKAGMFVSVSAGNDNINSNNNSPASERSVCTIAASTENDGKASFSNWGPAVDLYAPGHNILSARPGGGSQTMSGTSMAAPHAAGVAAYLIAKEGIPGDRVCLRLKQLSRPTIRNPGPDTTSRLLYNGSGR.

The N-terminal stretch at 1–20 (MTGFLTILSLSLAALSVTNA) is a signal peptide. Positions 21–116 (AQILSVPQGA…VEPDAIIKQH (96 aa)) are excised as a propeptide. The region spanning 37–114 (YIVVMKDDTS…AFVEPDAIIK (78 aa)) is the Inhibitor I9 domain. Residues 125 to 396 (PWGLSRLSNR…SRLLYNGSGR (272 aa)) form the Peptidase S8 domain. Active-site charge relay system residues include aspartate 156 and histidine 187. Residues asparagine 230 and asparagine 248 are each glycosylated (N-linked (GlcNAc...) asparagine). Serine 342 acts as the Charge relay system in catalysis. A disordered region spans residues 376–396 (PTIRNPGPDTTSRLLYNGSGR). N-linked (GlcNAc...) asparagine glycosylation is present at asparagine 392.

Belongs to the peptidase S8 family.

It is found in the secreted. Its function is as follows. Secreted subtilisin-like serine protease with keratinolytic activity that contributes to pathogenicity. This chain is Subtilisin-like protease 5 (SUB5), found in Arthroderma gypseum (strain ATCC MYA-4604 / CBS 118893) (Microsporum gypseum).